A 191-amino-acid chain; its full sequence is UPF0669 protein C6orf120 (191 aa).

The first 30 residues, 1-30 (MAAPRGRAAPWTTALLLLLASQVLSPGSCA), serve as a signal peptide directing secretion. Asparagine 53 is a glycosylation site (N-linked (GlcNAc...) asparagine).

Belongs to the UPF0669 family. In terms of tissue distribution, mainly expressed in hepatocytes and some weak expression in germinal center cells of lymph nodes.

It is found in the secreted. Functionally, may be involved in induction of apoptosis in CD4(+) T-cells, but not CD8(+) T-cells or hepatocytes. This chain is UPF0669 protein C6orf120 (C6orf120), found in Homo sapiens (Human).